Reading from the N-terminus, the 194-residue chain is Endoribonuclease YbeY (194 aa).

Residues H127, H131, and D137 each coordinate Zn(2+). A disordered region spans residues 162–194; it reads PLSNDEDSAPEQDDSFDDDASDSSGGIMSGGVS. Acidic residues predominate over residues 165–182; it reads NDEDSAPEQDDSFDDDAS.

It belongs to the endoribonuclease YbeY family. The cofactor is Zn(2+).

It localises to the cytoplasm. Functionally, single strand-specific metallo-endoribonuclease involved in late-stage 70S ribosome quality control and in maturation of the 3' terminus of the 16S rRNA. This is Endoribonuclease YbeY from Rhodopirellula baltica (strain DSM 10527 / NCIMB 13988 / SH1).